The primary structure comprises 487 residues: MPN domain-containing protein (487 aa).

The tract at residues M1–A55 is disordered. The residue at position 2 (A2) is an N-acetylalanine. S8 is modified (phosphoserine). A compositionally biased stretch (acidic residues) spans E15 to D28. The segment covering T33–A55 has biased composition (gly residues). Residues T61 to H156 enclose the RAMA domain. S113, S115, and W135 together coordinate DNA. The tract at residues A163–M217 is disordered. Phosphoserine is present on residues S168 and S171. A compositionally biased stretch (acidic residues) spans E172–V187. One can recognise an MPN domain in the interval V258–V393. Residues H335, H337, and D348 each contribute to the Zn(2+) site. The short motif at H335–D348 is the JAMM motif element.

It belongs to the peptidase M67 family. Monomer. Mainly monomoric, but when binds to dsDNA, forms homotetramer assembled into two homodimers. May interact with histones; this interaction is facilitated by. In terms of processing, degraded following binding to N(6)-methyladenosine methylated DNA (m6A).

Functionally, probable protease. Acts as a sensor of N(6)-methyladenosine methylation on DNA (m6A): recognizes and binds m6A DNA, leading to its degradation. Binds only double strand DNA (dsDNA) in a sequence-independent manner. The protein is MPN domain-containing protein of Mus musculus (Mouse).